The primary structure comprises 129 residues: MERYTKKNERFKAEEGKGSKKSRTFLTERERRALFNDRFFDLKNLIPNPTKGGEASIVQDGIVYINELQRLVSELKYLVEKKKCGARHNNIEVDNKNTIYGTSKIEHPFSKNKNTFNCLIRTLRFVHHF.

A compositionally biased stretch (basic and acidic residues) spans 1-18 (MERYTKKNERFKAEEGKG). Residues 1–24 (MERYTKKNERFKAEEGKGSKKSRT) are disordered. The bHLH domain occupies 19–68 (SKKSRTFLTERERRALFNDRFFDLKNLIPNPTKGGEASIVQDGIVYINEL).

This sequence belongs to the bHLH protein family.

It localises to the nucleus. The protein is Transcription factor bHLH138 of Arabidopsis thaliana (Mouse-ear cress).